Here is a 185-residue protein sequence, read N- to C-terminus: MKFKTNKLSLNLVLASSLLAASIPAFAVTGDTDQPIHIESDQQSLDMQGNVVTFTGNVIVTQGTIKINADKVVVTRPGGEQGKEVIDGYGKPATFYQMQDNGKPVEGHASQMHYELAKDFVVLTGNAYLQQVDSNIKGDKITYLVKEQKMQAFSDKGKRVTTVLVPSQLQDKNNKGQTPAQKKGN.

Positions 1–27 (MKFKTNKLSLNLVLASSLLAASIPAFA) are cleaved as a signal peptide. The disordered stretch occupies residues 166-185 (PSQLQDKNNKGQTPAQKKGN).

The protein belongs to the LptA family. As to quaternary structure, component of the lipopolysaccharide transport and assembly complex.

Its subcellular location is the periplasm. Functionally, involved in the assembly of lipopolysaccharide (LPS). Required for the translocation of LPS from the inner membrane to the outer membrane. May form a bridge between the inner membrane and the outer membrane, via interactions with LptC and LptD, thereby facilitating LPS transfer across the periplasm. This Escherichia coli O157:H7 protein is Lipopolysaccharide export system protein LptA.